Here is a 167-residue protein sequence, read N- to C-terminus: UPF0178 protein bll3966 (167 aa).

Belongs to the UPF0178 family.

In Bradyrhizobium diazoefficiens (strain JCM 10833 / BCRC 13528 / IAM 13628 / NBRC 14792 / USDA 110), this protein is UPF0178 protein bll3966.